Consider the following 424-residue polypeptide: Endochitinase 1 (424 aa).

The N-terminal stretch at 1–22 is a signal peptide; that stretch reads MPSLFAQSLAIIATLQATLGLA. In terms of domain architecture, GH18 spans 39-402; the sequence is YVNAVYFTNW…GTSSNKLGGP (364 aa). 3 N-linked (GlcNAc...) asparagine glycosylation sites follow: Asn74, Asn78, and Asn96. Residues 103-104 and 130-133 contribute to the chitin site; these read GN and GGWT. Glu172 acts as the Proton donor in catalysis. Chitin is bound by residues Tyr173 and 238 to 241; that span reads MAYD. Residues Asn248 and Asn347 are each glycosylated (N-linked (GlcNAc...) asparagine). Trp379 contacts chitin. The tract at residues 385–412 is disordered; the sequence is RQGPDSLIGTSSNKLGGPDTTENLLNYP. The span at 392 to 408 shows a compositional bias: polar residues; it reads IGTSSNKLGGPDTTENL.

This sequence belongs to the glycosyl hydrolase 18 family. Chitinase class V subfamily.

Its subcellular location is the secreted. It catalyses the reaction Random endo-hydrolysis of N-acetyl-beta-D-glucosaminide (1-&gt;4)-beta-linkages in chitin and chitodextrins.. Functionally, secreted chitinase involved in the degradation of chitin, a component of the cell walls of fungi and exoskeletal elements of some animals (including worms and arthropods). Participates in the infection process and directly acts in the penetration process of the host cuticle. The protein is Endochitinase 1 (chit1) of Metarhizium robertsii (strain ARSEF 23 / ATCC MYA-3075) (Metarhizium anisopliae (strain ARSEF 23)).